The chain runs to 207 residues: Oligoribonuclease (207 aa).

The 165-residue stretch at 8 to 172 folds into the Exonuclease domain; sequence LVWIDCEMTG…ADILESVREL (165 aa). The active site involves Tyr-129.

The protein belongs to the oligoribonuclease family.

The protein localises to the cytoplasm. Its function is as follows. 3'-to-5' exoribonuclease specific for small oligoribonucleotides. This chain is Oligoribonuclease, found in Leifsonia xyli subsp. xyli (strain CTCB07).